The sequence spans 260 residues: MVLIRVLANLLILQLSYAQKSSELVIGGDECNINEHRFLVALYDVSSGDFRGSGTLINPEWVLTAAHCETEEMKLQFGLHSKRVPNKDKQTRVSKEKFFCESNENYTKWNKDIMLIKLNRPVKNSAHIEPLSLPSSPPSVGSVCRIMGWGTLSDTEMILPDVPHCANINLLNYSDCQAAYPELPAKSRTLCAGILEGGKDTCSGDSGGPLICNGTFQGIASWGGTLCGYVREPGSYTKVFDHLDWIQSIIAGNTNVTCPL.

A signal peptide spans 1-18 (MVLIRVLANLLILQLSYA). Residues 19–24 (QKSSEL) constitute a propeptide that is removed on maturation. The Peptidase S1 domain occupies 25 to 251 (VIGGDECNIN…HLDWIQSIIA (227 aa)). Cystine bridges form between Cys31–Cys165, Cys100–Cys258, Cys144–Cys212, Cys176–Cys191, and Cys202–Cys227. The Charge relay system role is filled by His67. Asn105 carries an N-linked (GlcNAc...) asparagine glycan. Asp112 serves as the catalytic Charge relay system. Asn172 carries an N-linked (GlcNAc...) asparagine glycan. Ser206 serves as the catalytic Charge relay system. 2 N-linked (GlcNAc...) asparagine glycosylation sites follow: Asn213 and Asn255.

This sequence belongs to the peptidase S1 family. Snake venom subfamily. In terms of assembly, monomer. As to expression, expressed by the venom gland.

It is found in the secreted. Snake venom serine protease that may act in the hemostasis system of the prey. The sequence is that of Snake venom serine protease KN14 from Trimeresurus stejnegeri (Chinese green tree viper).